We begin with the raw amino-acid sequence, 277 residues long: Tryptophan synthase alpha chain (277 aa).

Catalysis depends on proton acceptor residues Glu-51 and Glu-62.

It belongs to the TrpA family. Tetramer of two alpha and two beta chains.

It catalyses the reaction (1S,2R)-1-C-(indol-3-yl)glycerol 3-phosphate + L-serine = D-glyceraldehyde 3-phosphate + L-tryptophan + H2O. It participates in amino-acid biosynthesis; L-tryptophan biosynthesis; L-tryptophan from chorismate: step 5/5. Its function is as follows. The alpha subunit is responsible for the aldol cleavage of indoleglycerol phosphate to indole and glyceraldehyde 3-phosphate. This Phenylobacterium zucineum (strain HLK1) protein is Tryptophan synthase alpha chain.